The sequence spans 385 residues: Arginine biosynthesis bifunctional protein ArgJ (385 aa).

Substrate-binding residues include Thr142, Lys168, Thr179, Glu259, Asn380, and Thr385. Thr179 serves as the catalytic Nucleophile.

The protein belongs to the ArgJ family. In terms of assembly, heterotetramer of two alpha and two beta chains.

It is found in the cytoplasm. It carries out the reaction N(2)-acetyl-L-ornithine + L-glutamate = N-acetyl-L-glutamate + L-ornithine. The enzyme catalyses L-glutamate + acetyl-CoA = N-acetyl-L-glutamate + CoA + H(+). Its pathway is amino-acid biosynthesis; L-arginine biosynthesis; L-ornithine and N-acetyl-L-glutamate from L-glutamate and N(2)-acetyl-L-ornithine (cyclic): step 1/1. The protein operates within amino-acid biosynthesis; L-arginine biosynthesis; N(2)-acetyl-L-ornithine from L-glutamate: step 1/4. Catalyzes two activities which are involved in the cyclic version of arginine biosynthesis: the synthesis of N-acetylglutamate from glutamate and acetyl-CoA as the acetyl donor, and of ornithine by transacetylation between N(2)-acetylornithine and glutamate. This chain is Arginine biosynthesis bifunctional protein ArgJ, found in Leptospira interrogans serogroup Icterohaemorrhagiae serovar copenhageni (strain Fiocruz L1-130).